Here is a 45-residue protein sequence, read N- to C-terminus: uncharacterized protein (45 aa).

This is an uncharacterized protein from Treponema pallidum (strain Nichols).